A 415-amino-acid chain; its full sequence is MRLKRFLLRYFPPGIILEYEKGGELKTKAIDLLELSPTTDVDLVVGEIQKAEPLITASRTQQVKQLILRLQEKIGQQDSRQFYLFKVLRAHILPLTNVAFNKSGSSFITGSYDRTCKVWDTASGEELHTLEGHRNVVYAIQFNNPYGDKIATGSFDKTCKLWSAETGKCYHTFRGHTAEIVCLVFNPQSTLIATGSMDTTAKLWDIQSGEEALTLSGHAAEIISLSFNTTGDRLITGSFDHTVSVWEIPSGRRIHTLIGHRGEISSAQFNWDCSLIATASMDKSCKLWDSLNGKCVATLTGHDDEVLDVTFDSTGQLVATASADGTARVYSASSRKCLAKLEGHEGEISKICFNAQGNRIVTASSDKTSRLWDPHTGECLQVLKGHTDEIFSCAFNYEGNTIITGSKDNTCRIWR.

8 WD repeats span residues 90 to 129 (AHILPLTNVAFNKSGSSFITGSYDRTCKVWDTASGEELHT), 132 to 174 (GHRN…HTFR), 175 to 214 (GHTAEIVCLVFNPQSTLIATGSMDTTAKLWDIQSGEEALT), 217 to 256 (GHAAEIISLSFNTTGDRLITGSFDHTVSVWEIPSGRRIHT), 259 to 298 (GHRGEISSAQFNWDCSLIATASMDKSCKLWDSLNGKCVAT), 301 to 340 (GHDDEVLDVTFDSTGQLVATASADGTARVYSASSRKCLAK), 343 to 384 (GHEG…QVLK), and 386 to 415 (HTDEIFSCAFNYEGNTIITGSKDNTCRIWR).

The protein belongs to the WD repeat WDR69 family.

The protein resides in the cytoplasm. The protein localises to the cytoskeleton. Its subcellular location is the flagellum basal body. It localises to the flagellum axoneme. In terms of biological role, required for axonemal dynein assembly and ciliary motility in ciliated organs, including Kupffer's vesicle, during embryogenesis. Facilitates the onset of robust cilia motility during development. This Xenopus laevis (African clawed frog) protein is Dynein assembly factor with WD repeat domains 1 (daw1).